Reading from the N-terminus, the 730-residue chain is Guanylate cyclase soluble subunit alpha-2 (730 aa).

The segment at 1-53 (MSRRKISSESFSSLGSDYLETSPEEEGECPLSKLCWNGSRSPPGPPGSRAAAM) is disordered. Residues 519 to 646 (TMLFSDIVGF…NNVTLASKFE (128 aa)) enclose the Guanylate cyclase domain.

This sequence belongs to the adenylyl cyclase class-4/guanylyl cyclase family. In terms of assembly, heterodimer of an alpha and a beta chain.

The protein localises to the cytoplasm. It catalyses the reaction GTP = 3',5'-cyclic GMP + diphosphate. Activated by nitric oxide in the presence of magnesium or manganese ions. Functionally, has guanylyl cyclase on binding to the beta-1 subunit. The protein is Guanylate cyclase soluble subunit alpha-2 (Gucy1a2) of Rattus norvegicus (Rat).